Here is a 193-residue protein sequence, read N- to C-terminus: Potassium-transporting ATPase KdpC subunit (193 aa).

The chain crosses the membrane as a helical span at residues 14–34 (ITFTFLVLCGLVYPLIVTGIA).

This sequence belongs to the KdpC family. In terms of assembly, the system is composed of three essential subunits: KdpA, KdpB and KdpC.

Its subcellular location is the cell membrane. Its function is as follows. Part of the high-affinity ATP-driven potassium transport (or Kdp) system, which catalyzes the hydrolysis of ATP coupled with the electrogenic transport of potassium into the cytoplasm. This subunit acts as a catalytic chaperone that increases the ATP-binding affinity of the ATP-hydrolyzing subunit KdpB by the formation of a transient KdpB/KdpC/ATP ternary complex. The protein is Potassium-transporting ATPase KdpC subunit of Bacillus thuringiensis subsp. konkukian (strain 97-27).